A 226-amino-acid chain; its full sequence is Fibrillarin-like rRNA/tRNA 2'-O-methyltransferase (226 aa).

Residues 82 to 83 (TT), 100 to 101 (EF), 125 to 126 (DA), and 145 to 148 (DVAQ) contribute to the S-adenosyl-L-methionine site.

It belongs to the methyltransferase superfamily. Fibrillarin family. As to quaternary structure, interacts with nop5. Component of box C/D small ribonucleoprotein (sRNP) particles that contain rpl7ae, FlpA and nop5, plus a guide RNA.

Involved in pre-rRNA and tRNA processing. Utilizes the methyl donor S-adenosyl-L-methionine to catalyze the site-specific 2'-hydroxyl methylation of ribose moieties in rRNA and tRNA. Site specificity is provided by a guide RNA that base pairs with the substrate. Methylation occurs at a characteristic distance from the sequence involved in base pairing with the guide RNA. The polypeptide is Fibrillarin-like rRNA/tRNA 2'-O-methyltransferase (Methanosarcina barkeri (strain Fusaro / DSM 804)).